We begin with the raw amino-acid sequence, 364 residues long: D-alanine--D-alanine ligase (364 aa).

Residues 146 to 352 (KLCAMNAGIA…FAELVEKLLL (207 aa)) form the ATP-grasp domain. Position 179-234 (179-234 (TKRFDWPLFVKPASLGSSVGISKVRNAEELAAALENACGLDSKALVEAAISGREIE)) interacts with ATP. Mg(2+) is bound by residues aspartate 305, glutamate 319, and asparagine 321.

Belongs to the D-alanine--D-alanine ligase family. Requires Mg(2+) as cofactor. Mn(2+) serves as cofactor.

It is found in the cytoplasm. The enzyme catalyses 2 D-alanine + ATP = D-alanyl-D-alanine + ADP + phosphate + H(+). It participates in cell wall biogenesis; peptidoglycan biosynthesis. Its function is as follows. Cell wall formation. The protein is D-alanine--D-alanine ligase of Chlorobaculum tepidum (strain ATCC 49652 / DSM 12025 / NBRC 103806 / TLS) (Chlorobium tepidum).